The sequence spans 170 residues: Zinc finger matrin-type protein 5 (170 aa).

The C3H1-type zinc-finger motif lies at 51–79 (EQNKRPCRKFLLTGQCDFGSNCRFSHMSE). A disordered region spans residues 150–170 (PPSLRAPPPGGWPLQPSVQWG).

Component of the U11/U12 snRNPs that are part of the U12-type spliceosome.

The protein localises to the nucleus. This Bos taurus (Bovine) protein is Zinc finger matrin-type protein 5 (ZMAT5).